The following is a 901-amino-acid chain: Protein translocase subunit SecA (901 aa).

ATP contacts are provided by residues glutamine 87, 105–109, and aspartate 512; that span reads GEGKT. The interval 859-901 is disordered; it reads HQDDDSAAAAALAAQTGERKVGRNDPCPCGSGKKYKQCHGRLQ. Positions 885, 887, 896, and 897 each coordinate Zn(2+). The segment covering 891-901 has biased composition (basic residues); the sequence is KKYKQCHGRLQ.

The protein belongs to the SecA family. In terms of assembly, monomer and homodimer. Part of the essential Sec protein translocation apparatus which comprises SecA, SecYEG and auxiliary proteins SecDF-YajC and YidC. Zn(2+) is required as a cofactor.

The protein localises to the cell inner membrane. It is found in the cytoplasm. The enzyme catalyses ATP + H2O + cellular proteinSide 1 = ADP + phosphate + cellular proteinSide 2.. Its function is as follows. Part of the Sec protein translocase complex. Interacts with the SecYEG preprotein conducting channel. Has a central role in coupling the hydrolysis of ATP to the transfer of proteins into and across the cell membrane, serving both as a receptor for the preprotein-SecB complex and as an ATP-driven molecular motor driving the stepwise translocation of polypeptide chains across the membrane. The polypeptide is Protein translocase subunit SecA (Escherichia coli O6:K15:H31 (strain 536 / UPEC)).